The sequence spans 289 residues: 4-diphosphocytidyl-2-C-methyl-D-erythritol kinase (289 aa).

Residue lysine 10 is part of the active site. Proline 94–serine 104 contributes to the ATP binding site. The active site involves aspartate 136.

It belongs to the GHMP kinase family. IspE subfamily.

It carries out the reaction 4-CDP-2-C-methyl-D-erythritol + ATP = 4-CDP-2-C-methyl-D-erythritol 2-phosphate + ADP + H(+). It functions in the pathway isoprenoid biosynthesis; isopentenyl diphosphate biosynthesis via DXP pathway; isopentenyl diphosphate from 1-deoxy-D-xylulose 5-phosphate: step 3/6. Its function is as follows. Catalyzes the phosphorylation of the position 2 hydroxy group of 4-diphosphocytidyl-2C-methyl-D-erythritol. The protein is 4-diphosphocytidyl-2-C-methyl-D-erythritol kinase of Bacillus cytotoxicus (strain DSM 22905 / CIP 110041 / 391-98 / NVH 391-98).